Here is a 149-residue protein sequence, read N- to C-terminus: Protein-export protein SecB (149 aa).

This sequence belongs to the SecB family. In terms of assembly, homotetramer, a dimer of dimers. One homotetramer interacts with 1 SecA dimer.

Its subcellular location is the cytoplasm. Functionally, one of the proteins required for the normal export of preproteins out of the cell cytoplasm. It is a molecular chaperone that binds to a subset of precursor proteins, maintaining them in a translocation-competent state. It also specifically binds to its receptor SecA. This is Protein-export protein SecB from Acidithiobacillus ferrooxidans (strain ATCC 23270 / DSM 14882 / CIP 104768 / NCIMB 8455) (Ferrobacillus ferrooxidans (strain ATCC 23270)).